The sequence spans 319 residues: Acetyl-coenzyme A carboxylase carboxyl transferase subunit alpha (319 aa).

The CoA carboxyltransferase C-terminal domain maps to 35 to 296; it reads NIDEEVHRLR…KAQLLEDLAD (262 aa).

The protein belongs to the AccA family. Acetyl-CoA carboxylase is a heterohexamer composed of biotin carboxyl carrier protein (AccB), biotin carboxylase (AccC) and two subunits each of ACCase subunit alpha (AccA) and ACCase subunit beta (AccD).

It is found in the cytoplasm. It catalyses the reaction N(6)-carboxybiotinyl-L-lysyl-[protein] + acetyl-CoA = N(6)-biotinyl-L-lysyl-[protein] + malonyl-CoA. The protein operates within lipid metabolism; malonyl-CoA biosynthesis; malonyl-CoA from acetyl-CoA: step 1/1. In terms of biological role, component of the acetyl coenzyme A carboxylase (ACC) complex. First, biotin carboxylase catalyzes the carboxylation of biotin on its carrier protein (BCCP) and then the CO(2) group is transferred by the carboxyltransferase to acetyl-CoA to form malonyl-CoA. This chain is Acetyl-coenzyme A carboxylase carboxyl transferase subunit alpha, found in Salmonella paratyphi C (strain RKS4594).